The following is an 856-amino-acid chain: TPR repeat-containing protein TP_0123 (856 aa).

TPR repeat units follow at residues 107–140 (YAAV…VADD), 523–556 (YRTF…AEQL), and 603–636 (TVSL…ALQY).

In Treponema pallidum (strain Nichols), this protein is TPR repeat-containing protein TP_0123.